Here is a 231-residue protein sequence, read N- to C-terminus: Protein RhiA (231 aa).

May be involved in plant-microbe interaction. The protein is Protein RhiA (rhiA) of Rhizobium leguminosarum bv. viciae.